The sequence spans 686 residues: Envelope glycoprotein H (686 aa).

The signal sequence occupies residues 1–24 (MPASSVRLPLRLLTLAGLLALAGA). Residues 25-646 (AALARGAPQG…TSTRLAPVSP (622 aa)) lie on the Virion surface side of the membrane. N-linked (GlcNAc...) asparagine; by host glycans are attached at residues Asn77, Asn162, Asn542, Asn604, and Asn627. The interaction with gL stretch occupies residues 157-217 (PAAVFNVTLG…PPAGRFHVYT (61 aa)). Residues 647-667 (AYVVASVVGAAITVGILYALF) traverse the membrane as a helical segment. At 668 to 686 (KMLCSFSSEGYSRLINARS) the chain is on the intravirion side.

Belongs to the herpesviridae glycoprotein H family. In terms of assembly, interacts with glycoprotein L (gL); this interaction is necessary for the correct processing and cell surface expression of gH. The heterodimer gH/gL seems to interact with gB trimers during fusion. In terms of processing, N-glycosylated, O-glycosylated, and sialylated.

It is found in the virion membrane. The protein resides in the host cell membrane. Its subcellular location is the host endosome membrane. Its function is as follows. The heterodimer glycoprotein H-glycoprotein L is required for the fusion of viral and plasma membranes leading to virus entry into the host cell. Following initial binding to host receptor, membrane fusion is mediated by the fusion machinery composed of gB and the heterodimer gH/gL. May also be involved in the fusion between the virion envelope and the outer nuclear membrane during virion morphogenesis. This is Envelope glycoprotein H from Suid herpesvirus 1 (strain Rice) (SuHV-1).